Here is an 842-residue protein sequence, read N- to C-terminus: DNA gyrase subunit A (842 aa).

Residues 42–511 enclose the Topo IIA-type catalytic domain; that stretch reads LPEVRDGLKP…ADGEVSDEDL (470 aa). The O-(5'-phospho-DNA)-tyrosine intermediate role is filled by Y130. The short motif at 538–544 is the GyrA-box element; that stretch reads QKRGGKG. Positions 822–842 are disordered; the sequence is EDEAAESISESDADTAESPEA.

The protein belongs to the type II topoisomerase GyrA/ParC subunit family. Heterotetramer, composed of two GyrA and two GyrB chains. In the heterotetramer, GyrA contains the active site tyrosine that forms a transient covalent intermediate with DNA, while GyrB binds cofactors and catalyzes ATP hydrolysis.

It is found in the cytoplasm. The catalysed reaction is ATP-dependent breakage, passage and rejoining of double-stranded DNA.. Inhibited by 4-quinoline drugs (nalidixic acid, ciprofloxacin, ofloxacin), although it is much less sensitive than the corresponding enzyme from E.coli. Functionally, a type II topoisomerase that negatively supercoils closed circular double-stranded (ds) DNA in an ATP-dependent manner to modulate DNA topology and maintain chromosomes in an underwound state. Negative supercoiling favors strand separation, and DNA replication, transcription, recombination and repair, all of which involve strand separation. Also able to catalyze the interconversion of other topological isomers of dsDNA rings, including catenanes and knotted rings. Type II topoisomerases break and join 2 DNA strands simultaneously in an ATP-dependent manner. The sequence is that of DNA gyrase subunit A from Mycolicibacterium smegmatis (strain ATCC 700084 / mc(2)155) (Mycobacterium smegmatis).